The primary structure comprises 325 residues: Transaldolase (325 aa).

The active-site Schiff-base intermediate with substrate is K125.

Belongs to the transaldolase family. Type 2 subfamily.

It is found in the cytoplasm. The catalysed reaction is D-sedoheptulose 7-phosphate + D-glyceraldehyde 3-phosphate = D-erythrose 4-phosphate + beta-D-fructose 6-phosphate. It participates in carbohydrate degradation; pentose phosphate pathway; D-glyceraldehyde 3-phosphate and beta-D-fructose 6-phosphate from D-ribose 5-phosphate and D-xylulose 5-phosphate (non-oxidative stage): step 2/3. Its function is as follows. Transaldolase is important for the balance of metabolites in the pentose-phosphate pathway. The chain is Transaldolase from Campylobacter jejuni subsp. jejuni serotype O:6 (strain 81116 / NCTC 11828).